A 76-amino-acid chain; its full sequence is Conotoxin Vc6.3 (76 aa).

The N-terminal stretch at 1–22 (MKLTCVMIVAVLFLTANTFATA) is a signal peptide. Residues 23 to 50 (DDPRNGLRDLFSIAHHEMKNPEASKLNE) constitute a propeptide that is removed on maturation. 3 disulfides stabilise this stretch: C52-C66, C59-C70, and C67-C75.

This sequence belongs to the conotoxin O1 superfamily. As to expression, expressed by the venom duct.

It is found in the secreted. The sequence is that of Conotoxin Vc6.3 from Conus victoriae (Queen Victoria cone).